A 932-amino-acid chain; its full sequence is Glycine dehydrogenase (decarboxylating) (932 aa).

An N6-(pyridoxal phosphate)lysine modification is found at lysine 685.

It belongs to the GcvP family. As to quaternary structure, the glycine cleavage system is composed of four proteins: P, T, L and H. Requires pyridoxal 5'-phosphate as cofactor.

It catalyses the reaction N(6)-[(R)-lipoyl]-L-lysyl-[glycine-cleavage complex H protein] + glycine + H(+) = N(6)-[(R)-S(8)-aminomethyldihydrolipoyl]-L-lysyl-[glycine-cleavage complex H protein] + CO2. Functionally, the glycine cleavage system catalyzes the degradation of glycine. The P protein binds the alpha-amino group of glycine through its pyridoxal phosphate cofactor; CO(2) is released and the remaining methylamine moiety is then transferred to the lipoamide cofactor of the H protein. The sequence is that of Glycine dehydrogenase (decarboxylating) from Brucella canis (strain ATCC 23365 / NCTC 10854 / RM-666).